A 761-amino-acid polypeptide reads, in one-letter code: Zinc finger protein 711 (761 aa).

C2H2-type zinc fingers lie at residues Tyr-383–His-408, Tyr-414–His-436, His-476–His-499, His-505–His-527, and Phe-533–His-556. The segment at Phe-562–Phe-584 adopts a C2H2-type 6; atypical zinc-finger fold. Cys-564, Cys-567, and His-580 together coordinate Zn(2+). 6 consecutive C2H2-type zinc fingers follow at residues His-590–His-613, His-619–His-641, His-647–His-670, Phe-676–His-698, Tyr-704–His-727, and His-733–His-755.

Belongs to the krueppel C2H2-type zinc-finger protein family. In terms of tissue distribution, present in ovary and brain but not in other tissues (at protein level).

The protein resides in the nucleus. It localises to the cytoplasm. Functionally, transcription regulator required for brain development. Probably acts as a transcription factor that binds to the promoter of target genes, leading to activate their expression. This chain is Zinc finger protein 711 (znf711), found in Danio rerio (Zebrafish).